Here is a 196-residue protein sequence, read N- to C-terminus: RNA pyrophosphohydrolase (196 aa).

The Nudix hydrolase domain maps to 6–149 (GYRPNVGIVI…KRDVYRKVMK (144 aa)). The Nudix box signature appears at 38–59 (GGINDNESAEQAMYRELHEEVG).

Belongs to the Nudix hydrolase family. RppH subfamily. It depends on a divalent metal cation as a cofactor.

Accelerates the degradation of transcripts by removing pyrophosphate from the 5'-end of triphosphorylated RNA, leading to a more labile monophosphorylated state that can stimulate subsequent ribonuclease cleavage. The polypeptide is RNA pyrophosphohydrolase (Haemophilus influenzae (strain PittEE)).